The sequence spans 608 residues: Kelch-like protein 10 (608 aa).

The BTB domain occupies 39-106 (CDVVIKVNGF…AYTRTVPITP (68 aa)). 6 Kelch repeats span residues 292-339 (ILFA…YLKG), 340-386 (YVYI…VLSN), 388-433 (IYAM…TLYG), 434-480 (KVYI…AYGE), 481-527 (HVYA…VVDD), and 529-574 (LFVV…VVPG). The residue at position 501 (Ser501) is a Phosphoserine.

Self-associates. Interacts with CUL3; indicative for the participation in an E3 ubiquitin ligase complex.

It is found in the cytoplasm. Its pathway is protein modification; protein ubiquitination. Its function is as follows. May be a substrate-specific adapter of a CUL3-based E3 ubiquitin-protein ligase complex which mediates the ubiquitination and subsequent proteasomal degradation of target proteins during spermatogenesis. In Rattus norvegicus (Rat), this protein is Kelch-like protein 10 (Klhl10).